Reading from the N-terminus, the 695-residue chain is Calcium-binding acidic-repeat protein (695 aa).

A signal peptide (or 23) is located at residues 1–20 (MSHLWCWLFLVLCLACLVLS). 6 TSP type-3 repeats span residues 24–38 (KDSDGDGLLDVDEIN), 47–56 (ADSDQDGLTD), 70–82 (KDTDDDSIGDGVE), 184–196 (GDSDDDGVSDGAE), 202–214 (KDSDGDGLTDEEE), and 248–260 (GDSDDDGLGDGAE). The disordered stretch occupies residues 45–695 (YNADSDQDGL…TDPWRSDHSV (651 aa)). The span at 59–70 (EVNRHQTHPQDK) shows a compositional bias: basic and acidic residues. 3 stretches are compositionally biased toward acidic residues: residues 271-283 (ADSDNDGLDDGEE), 291-306 (PEDPDSDNDGLNDGDE), and 313-324 (DPEEDDSDEDGV). TSP type-3 repeat units lie at residues 294 to 308 (PDSDNDGLNDGDEVN), 317 to 329 (DDSDEDGVCDGAE), 340 to 352 (EDSDNDGIPDGAE), 363 to 375 (EDSDDDGIADGAE), 379 to 393 (TDSDGDGLPDEDEVA), 402 to 414 (ADSDYDGLTDGAE), 425 to 437 (KDTDDDGLGDGVE), 470 to 482 (EDTDDDGLTDGAE), 493 to 505 (ADTDDDGLTDGAE), 516 to 528 (ADSDGDGLSDGAE), 539 to 551 (GDSDDDGVPDAAE), 555 to 569 (KDSDGDGLSDTDEVR), 600 to 609 (RDTDGDGVAD), 623 to 635 (ADTDDDGLTDGAE), and 646 to 658 (ADSDDDGLSDGAE). 2 stretches are compositionally biased toward acidic residues: residues 361 to 370 (NDEDSDDDGI) and 381 to 392 (SDGDGLPDEDEV). Acidic residues-rich tracts occupy residues 467–477 (PNDEDTDDDGL) and 491–500 (EDADTDDDGL). Over residues 537 to 546 (NDGDSDDDGV) the composition is skewed to acidic residues. Over residues 589 to 603 (EILKHKTDPRNRDTD) the composition is skewed to basic and acidic residues. Residues 665 to 679 (NAKDGDSDDDGKADG) are compositionally biased toward basic and acidic residues.

The protein localises to the secreted. It is found in the endoplasmic reticulum. Functionally, may function as a calcium-binding protein. The chain is Calcium-binding acidic-repeat protein from Euglena gracilis.